The following is a 232-amino-acid chain: Octanoyltransferase (232 aa).

The region spanning Glu-44 to Leu-219 is the BPL/LPL catalytic domain. Substrate-binding positions include Arg-83–His-90, Ala-150–Gly-152, and Gly-163–Ser-165. Cys-181 acts as the Acyl-thioester intermediate in catalysis.

The protein belongs to the LipB family.

It is found in the cytoplasm. The enzyme catalyses octanoyl-[ACP] + L-lysyl-[protein] = N(6)-octanoyl-L-lysyl-[protein] + holo-[ACP] + H(+). Its pathway is protein modification; protein lipoylation via endogenous pathway; protein N(6)-(lipoyl)lysine from octanoyl-[acyl-carrier-protein]: step 1/2. Catalyzes the transfer of endogenously produced octanoic acid from octanoyl-acyl-carrier-protein onto the lipoyl domains of lipoate-dependent enzymes. Lipoyl-ACP can also act as a substrate although octanoyl-ACP is likely to be the physiological substrate. In Xanthomonas euvesicatoria pv. vesicatoria (strain 85-10) (Xanthomonas campestris pv. vesicatoria), this protein is Octanoyltransferase.